A 242-amino-acid polypeptide reads, in one-letter code: Phosphoribosyl isomerase A (242 aa).

Asp-12 acts as the Proton acceptor in catalysis. Asp-131 serves as the catalytic Proton donor.

It belongs to the HisA/HisF family.

The protein resides in the cytoplasm. It catalyses the reaction 1-(5-phospho-beta-D-ribosyl)-5-[(5-phospho-beta-D-ribosylamino)methylideneamino]imidazole-4-carboxamide = 5-[(5-phospho-1-deoxy-D-ribulos-1-ylimino)methylamino]-1-(5-phospho-beta-D-ribosyl)imidazole-4-carboxamide. The catalysed reaction is N-(5-phospho-beta-D-ribosyl)anthranilate = 1-(2-carboxyphenylamino)-1-deoxy-D-ribulose 5-phosphate. It participates in amino-acid biosynthesis; L-histidine biosynthesis; L-histidine from 5-phospho-alpha-D-ribose 1-diphosphate: step 4/9. Its pathway is amino-acid biosynthesis; L-tryptophan biosynthesis; L-tryptophan from chorismate: step 3/5. In terms of biological role, involved in both the histidine and tryptophan biosynthetic pathways. This is Phosphoribosyl isomerase A from Streptomyces avermitilis (strain ATCC 31267 / DSM 46492 / JCM 5070 / NBRC 14893 / NCIMB 12804 / NRRL 8165 / MA-4680).